Here is a 209-residue protein sequence, read N- to C-terminus: Protein N-terminal glutamine amidohydrolase (209 aa).

Catalysis depends on residues cysteine 30, histidine 83, and aspartate 99.

Belongs to the NTAQ1 family. Monomer. As to expression, widely expressed.

The protein localises to the cytoplasm. It localises to the cytosol. Its subcellular location is the nucleus. It carries out the reaction N-terminal L-glutaminyl-[protein] + H2O = N-terminal L-glutamyl-[protein] + NH4(+). Mediates the side-chain deamidation of N-terminal glutamine residues to glutamate, an important step in N-end rule pathway of protein degradation. Conversion of the resulting N-terminal glutamine to glutamate renders the protein susceptible to arginylation, polyubiquitination and degradation as specified by the N-end rule. Does not act on substrates with internal or C-terminal glutamine and does not act on non-glutamine residues in any position. Does not deaminate acetylated N-terminal glutamine. With the exception of proline, all tested second-position residues on substrate peptides do not greatly influence the activity. In contrast, a proline at position 2, virtually abolishes deamidation of N-terminal glutamine. This chain is Protein N-terminal glutamine amidohydrolase (Ntaq1), found in Mus musculus (Mouse).